Consider the following 720-residue polypeptide: MNPIVKTFPYGQHTVTIETGVMARQATAAVMVSMDDTAVLVTVVGKKEAVEGRDFFPLTVNYQERTYAAGRIPGGFFKREGRPSEGETLTARLIDRPIRPLFPEGFLNEVQVVATVMSVNPAVSPDIVAMIGTSAALAISGIPFNGPIGAARVGYINDQYILNPSVVELQESKLDLVVAGTAAAVLMVESEAAILPEEVMLGAVVYGHDQLQTVIKAVNEFAAEVGTKPWNWVAPAANVTLKAKIAELAVAAIGEAYRITEKAVRYDAISALKQRIVAEIVAADETQDAGEVADLFHELESDVVRGRILRGEPRIDGRDPQMIRALSVGTGVLPRVHGSALFTRGETQALVACTLGTERDAQTIDEITGERTDRFMLHYNFPPYCVGETGMMGSPKRREIGHGRLARRGVSAVIPSQAEFPYVVRVVSEITESNGSSSMASVCGTSLALMDAGVPIKASVAGIAMGLVKEGDSFVVLSDILGDEDHLGDMDFKVAGTSEGVTALQMDIKIEGITKEIMQIALKQARDARLHILTVMDKAIGVARDDISDFAPRIHTIKINPEKIKDVIGKGGSVIRALTEETGTTIELEDDGTVKIAAVSGEAAQEAIRRIQALTADVEIGRIYEGKVTRLAEFGAFVNILPGKDGLVHISQITDERVKDVSDYLKVGDMVRTKVLEVDRQGRIRLSIKEAKRDELPAAESVAESAPAQEAVVEQVPMTE.

2 residues coordinate Mg(2+): Asp-485 and Asp-491. The KH domain maps to Pro-552–Thr-615. Residues Gly-621–Lys-689 enclose the S1 motif domain. Residues Pro-697–Glu-720 are disordered. Positions Ala-698–Glu-720 are enriched in low complexity.

The protein belongs to the polyribonucleotide nucleotidyltransferase family. As to quaternary structure, component of the RNA degradosome, which is a multiprotein complex involved in RNA processing and mRNA degradation. Requires Mg(2+) as cofactor.

Its subcellular location is the cytoplasm. It catalyses the reaction RNA(n+1) + phosphate = RNA(n) + a ribonucleoside 5'-diphosphate. Functionally, involved in mRNA degradation. Catalyzes the phosphorolysis of single-stranded polyribonucleotides processively in the 3'- to 5'-direction. The protein is Polyribonucleotide nucleotidyltransferase of Tolumonas auensis (strain DSM 9187 / NBRC 110442 / TA 4).